We begin with the raw amino-acid sequence, 444 residues long: Tubulin beta chain (444 aa).

Residues Gln11, Glu69, Ser138, Gly142, Thr143, Gly144, Asn204, and Asn226 each contribute to the GTP site. Glu69 contributes to the Mg(2+) binding site. Positions 423-444 are disordered; the sequence is QQYQDATAEEEGEFDDEEEMDV. A compositionally biased stretch (acidic residues) spans 429–444; it reads TAEEEGEFDDEEEMDV.

Belongs to the tubulin family. In terms of assembly, dimer of alpha and beta chains. A typical microtubule is a hollow water-filled tube with an outer diameter of 25 nm and an inner diameter of 15 nM. Alpha-beta heterodimers associate head-to-tail to form protofilaments running lengthwise along the microtubule wall with the beta-tubulin subunit facing the microtubule plus end conferring a structural polarity. Microtubules usually have 13 protofilaments but different protofilament numbers can be found in some organisms and specialized cells. It depends on Mg(2+) as a cofactor.

Its subcellular location is the cytoplasm. It is found in the cytoskeleton. Its function is as follows. Tubulin is the major constituent of microtubules, a cylinder consisting of laterally associated linear protofilaments composed of alpha- and beta-tubulin heterodimers. Microtubules grow by the addition of GTP-tubulin dimers to the microtubule end, where a stabilizing cap forms. Below the cap, tubulin dimers are in GDP-bound state, owing to GTPase activity of alpha-tubulin. The chain is Tubulin beta chain from Euplotes focardii.